Consider the following 65-residue polypeptide: Large ribosomal subunit protein uL30 (65 aa).

It belongs to the universal ribosomal protein uL30 family. Part of the 50S ribosomal subunit.

This is Large ribosomal subunit protein uL30 from Desulfosudis oleivorans (strain DSM 6200 / JCM 39069 / Hxd3) (Desulfococcus oleovorans).